A 119-amino-acid chain; its full sequence is Ribonuclease P protein component (119 aa).

The protein belongs to the RnpA family. Consists of a catalytic RNA component (M1 or rnpB) and a protein subunit.

It catalyses the reaction Endonucleolytic cleavage of RNA, removing 5'-extranucleotides from tRNA precursor.. Functionally, RNaseP catalyzes the removal of the 5'-leader sequence from pre-tRNA to produce the mature 5'-terminus. It can also cleave other RNA substrates such as 4.5S RNA. The protein component plays an auxiliary but essential role in vivo by binding to the 5'-leader sequence and broadening the substrate specificity of the ribozyme. This chain is Ribonuclease P protein component, found in Halalkalibacterium halodurans (strain ATCC BAA-125 / DSM 18197 / FERM 7344 / JCM 9153 / C-125) (Bacillus halodurans).